The primary structure comprises 597 residues: Fructan 1-exohydrolase w1 (597 aa).

The N-terminal stretch at 1–20 (MAQAWAFLLPVLVFGSYVTS) is a signal peptide. Asp76 is a catalytic residue. Residues Asn169, Asn237, and Asn249 are each glycosylated (N-linked (GlcNAc...) asparagine). Cys447 and Cys493 form a disulfide bridge. A glycan (N-linked (GlcNAc...) asparagine) is linked at Asn568.

The protein belongs to the glycosyl hydrolase 32 family.

It catalyses the reaction Hydrolysis of terminal, non-reducing (2-&gt;1)-linked beta-D-fructofuranose residues in fructans.. With respect to regulation, inhibited by sucrose. Its function is as follows. Hydrolyzes inulin-type beta-(2,1)-fructans and beta-(2,1)-linkages in branched fructans. Has low activity against beta-(2,6)-linked fructans. May play a role as a beta-(2,1)-trimmer during graminan biosynthesis. This Triticum aestivum (Wheat) protein is Fructan 1-exohydrolase w1.